Consider the following 141-residue polypeptide: Cholinesterase (141 aa).

Residue asparagine 39 is glycosylated (N-linked (GlcNAc...) asparagine). Residue 49–50 coordinates substrate; the sequence is GG. The active-site Acyl-ester intermediate is the serine 131. The residue at position 131 (serine 131) is a Phosphoserine.

Belongs to the type-B carboxylesterase/lipase family. Homotetramer; disulfide-linked. Dimer of dimers. In terms of tissue distribution, present in most cells except erythrocytes.

The protein resides in the secreted. It carries out the reaction an acylcholine + H2O = a carboxylate + choline + H(+). In terms of biological role, esterase with broad substrate specificity. Contributes to the inactivation of the neurotransmitter acetylcholine. Can degrade neurotoxic organophosphate esters. The protein is Cholinesterase (BCHE) of Sus scrofa (Pig).